We begin with the raw amino-acid sequence, 176 residues long: NAD(P)H-quinone oxidoreductase subunit 6, chloroplastic (176 aa).

A run of 5 helical transmembrane segments spans residues phenylalanine 10–proline 30, proline 32–leucine 52, alanine 61–methionine 81, leucine 92–isoleucine 112, and phenylalanine 152–alanine 172.

It belongs to the complex I subunit 6 family. NDH is composed of at least 16 different subunits, 5 of which are encoded in the nucleus.

Its subcellular location is the plastid. It is found in the chloroplast thylakoid membrane. The catalysed reaction is a plastoquinone + NADH + (n+1) H(+)(in) = a plastoquinol + NAD(+) + n H(+)(out). The enzyme catalyses a plastoquinone + NADPH + (n+1) H(+)(in) = a plastoquinol + NADP(+) + n H(+)(out). NDH shuttles electrons from NAD(P)H:plastoquinone, via FMN and iron-sulfur (Fe-S) centers, to quinones in the photosynthetic chain and possibly in a chloroplast respiratory chain. The immediate electron acceptor for the enzyme in this species is believed to be plastoquinone. Couples the redox reaction to proton translocation, and thus conserves the redox energy in a proton gradient. The protein is NAD(P)H-quinone oxidoreductase subunit 6, chloroplastic (ndhG) of Solanum tuberosum (Potato).